The following is a 373-amino-acid chain: Inhibitor of nuclear factor kappa-B kinase-interacting protein (373 aa).

Basic residues predominate over residues 1-11 (MSEVKSRKKPG). Positions 1–38 (MSEVKSRKKPGPKVAAPEPEKRSDGRKNPEARGDAGWA) are disordered. Over residues 18–33 (EPEKRSDGRKNPEARG) the composition is skewed to basic and acidic residues. A helical transmembrane segment spans residues 43–59 (GLSLLSLAMTLGLAWLV). 2 coiled-coil regions span residues 86-257 (LQSK…NKLS) and 285-324 (QDLI…TLEG). An N-linked (GlcNAc...) asparagine glycan is attached at asparagine 151.

N-glycosylated at Asn-151.

The protein localises to the endoplasmic reticulum membrane. In terms of biological role, target of p53/TP53 with pro-apoptotic function. The protein is Inhibitor of nuclear factor kappa-B kinase-interacting protein (Ikbip) of Mus musculus (Mouse).